The primary structure comprises 27 residues: Secretin (27 aa).

Residue Met27 is modified to Methionine amide.

The protein belongs to the glucagon family.

It localises to the secreted. In terms of biological role, hormone involved in different processes, such as regulation of the pH of the duodenal content, food intake and water homeostasis. Exerts its biological effects by binding to secretin receptor (SCTR), a G-protein coupled receptor expressed in the basolateral domain of several cells. This Gallus gallus (Chicken) protein is Secretin.